The primary structure comprises 406 residues: Protein transport protein HofC homolog (406 aa).

3 consecutive transmembrane segments (helical) span residues 167–187 (MVLG…VPQF), 214–234 (QNIG…YFYL), and 379–399 (MMVI…LPIF).

It belongs to the GSP F family.

Its subcellular location is the cell inner membrane. This chain is Protein transport protein HofC homolog (hofC), found in Haemophilus influenzae (strain ATCC 51907 / DSM 11121 / KW20 / Rd).